The sequence spans 255 residues: Ribosomal RNA small subunit methyltransferase A (255 aa).

Asn12, Leu14, Gly39, Glu60, Asp84, and Asn106 together coordinate S-adenosyl-L-methionine.

This sequence belongs to the class I-like SAM-binding methyltransferase superfamily. rRNA adenine N(6)-methyltransferase family. RsmA subfamily.

The protein resides in the cytoplasm. The catalysed reaction is adenosine(1518)/adenosine(1519) in 16S rRNA + 4 S-adenosyl-L-methionine = N(6)-dimethyladenosine(1518)/N(6)-dimethyladenosine(1519) in 16S rRNA + 4 S-adenosyl-L-homocysteine + 4 H(+). Functionally, specifically dimethylates two adjacent adenosines (A1518 and A1519) in the loop of a conserved hairpin near the 3'-end of 16S rRNA in the 30S particle. May play a critical role in biogenesis of 30S subunits. The sequence is that of Ribosomal RNA small subunit methyltransferase A from Janthinobacterium sp. (strain Marseille) (Minibacterium massiliensis).